A 277-amino-acid polypeptide reads, in one-letter code: Diaminopimelate epimerase (277 aa).

Positions 15 and 74 each coordinate substrate. Residue C83 is the Proton donor of the active site. Residues 84–85 (GN), N159, N194, and 212–213 (ER) each bind substrate. C221 functions as the Proton acceptor in the catalytic mechanism. 222–223 (GT) is a substrate binding site.

Belongs to the diaminopimelate epimerase family. Homodimer.

It is found in the cytoplasm. The catalysed reaction is (2S,6S)-2,6-diaminopimelate = meso-2,6-diaminopimelate. It participates in amino-acid biosynthesis; L-lysine biosynthesis via DAP pathway; DL-2,6-diaminopimelate from LL-2,6-diaminopimelate: step 1/1. In terms of biological role, catalyzes the stereoinversion of LL-2,6-diaminopimelate (L,L-DAP) to meso-diaminopimelate (meso-DAP), a precursor of L-lysine and an essential component of the bacterial peptidoglycan. Involved in the succinylase branch of the diaminopimelate biosynthesis. The polypeptide is Diaminopimelate epimerase (Corynebacterium glutamicum (strain ATCC 13032 / DSM 20300 / JCM 1318 / BCRC 11384 / CCUG 27702 / LMG 3730 / NBRC 12168 / NCIMB 10025 / NRRL B-2784 / 534)).